A 507-amino-acid polypeptide reads, in one-letter code: Iroquois-class homeodomain protein IRX-3 (507 aa).

The disordered stretch occupies residues R19 to G39. The span at A22–G39 shows a compositional bias: gly residues. The homeobox; TALE-type DNA-binding region spans D130–N192. Disordered regions lie at residues K193–A398 and R416–D468. Acidic residues-rich tracts occupy residues R213–E223 and E230–N261. 2 stretches are compositionally biased toward pro residues: residues A314–A342 and F418–H428. S326 and S329 each carry phosphoserine. Over residues A436–P460 the composition is skewed to low complexity.

The protein belongs to the TALE/IRO homeobox family. In terms of tissue distribution, expressed by neural progenitor cells in discrete domains of the ventral neural tube. Also expressed in specific and overlapping patterns with Irx1 and Irx2 in the developing and adult metanephric kidney. In the adult metanephros, renal expression is confined to the S3 segment of the proximal tubule, in the loop of Henle.

The protein localises to the nucleus. Functionally, transcription factor involved in SHH-dependent neural patterning. Together with NKX2-2 and NKX6-1 acts to restrict the generation of motor neurons to the appropriate region of the neural tube. Belongs to the class I proteins of neuronal progenitor factors, which are repressed by SHH signals. Involved in the transcriptional repression of MNX1 in non-motor neuron cells. Acts as a regulator of energy metabolism. In Mus musculus (Mouse), this protein is Iroquois-class homeodomain protein IRX-3 (Irx3).